A 561-amino-acid chain; its full sequence is Chaperonin GroEL 1 (561 aa).

Residues 29-32, 86-90, G413, and D495 each bind ATP; these read TMGP and DGTTT.

This sequence belongs to the chaperonin (HSP60) family. In terms of assembly, forms a cylinder of 14 subunits composed of two heptameric rings stacked back-to-back. Interacts with the co-chaperonin GroES.

It localises to the cytoplasm. The enzyme catalyses ATP + H2O + a folded polypeptide = ADP + phosphate + an unfolded polypeptide.. Together with its co-chaperonin GroES, plays an essential role in assisting protein folding. The GroEL-GroES system forms a nano-cage that allows encapsulation of the non-native substrate proteins and provides a physical environment optimized to promote and accelerate protein folding. The polypeptide is Chaperonin GroEL 1 (Trichodesmium erythraeum (strain IMS101)).